A 335-amino-acid chain; its full sequence is 2-acylglycerol O-acyltransferase 1 (335 aa).

The next 2 helical transmembrane spans lie at 24-44 (WVFS…CLVL) and 47-67 (VWLL…TPQA). N-linked (GlcNAc...) asparagine glycans are attached at residues Asn125 and Asn180.

Belongs to the diacylglycerol acyltransferase family.

It is found in the endoplasmic reticulum membrane. The enzyme catalyses a 2-acylglycerol + an acyl-CoA = a 1,2-diacylglycerol + CoA. It catalyses the reaction a 2-acylglycerol + an acyl-CoA = a 1,2-diacyl-sn-glycerol + CoA. The catalysed reaction is a 2-acylglycerol + an acyl-CoA = a 2,3-diacyl-sn-glycerol + CoA. It carries out the reaction a 1-acylglycerol + an acyl-CoA = a 1,2-diacylglycerol + CoA. The enzyme catalyses a 1-acylglycerol + an acyl-CoA = a 1,3-diacylglycerol + CoA. It catalyses the reaction a 1-acyl-sn-glycerol + an acyl-CoA = a 1,3-diacyl-sn-glycerol + CoA. The catalysed reaction is a 3-acyl-sn-glycerol + an acyl-CoA = a 1,3-diacyl-sn-glycerol + CoA. Its pathway is glycerolipid metabolism; triacylglycerol biosynthesis. Functionally, involved in glycerolipid synthesis and lipid metabolism. Catalyzes the formation of diacylglycerol, the precursor of triacylglycerol, by transferring the acyl chain of a fatty acyl-CoA to a monoacylglycerol, mainly at the sn-1 or sn-3 positions. It uses both sn-2-monoacylglycerol (2-acylglycerol) and sn-1-monoacylglycerol (1-acyl-sn-glycerol) equally well as substrates, and uses sn-3-monoacylglycerol (3-acyl-sn-glycerol) with lower efficiency. The chain is 2-acylglycerol O-acyltransferase 1 (mogat1) from Xenopus laevis (African clawed frog).